We begin with the raw amino-acid sequence, 294 residues long: Methionine aminopeptidase (294 aa).

Residue histidine 65 participates in substrate binding. A divalent metal cation-binding residues include aspartate 85, aspartate 96, and histidine 156. Residue histidine 164 coordinates substrate. A divalent metal cation contacts are provided by glutamate 189 and glutamate 279.

This sequence belongs to the peptidase M24A family. Methionine aminopeptidase archaeal type 2 subfamily. Monomer. Co(2+) serves as cofactor. The cofactor is Zn(2+). It depends on Mn(2+) as a cofactor. Requires Fe(2+) as cofactor.

It carries out the reaction Release of N-terminal amino acids, preferentially methionine, from peptides and arylamides.. Its function is as follows. Removes the N-terminal methionine from nascent proteins. The N-terminal methionine is often cleaved when the second residue in the primary sequence is small and uncharged (Met-Ala-, Cys, Gly, Pro, Ser, Thr, or Val). In Methanocaldococcus jannaschii (strain ATCC 43067 / DSM 2661 / JAL-1 / JCM 10045 / NBRC 100440) (Methanococcus jannaschii), this protein is Methionine aminopeptidase.